A 369-amino-acid chain; its full sequence is UPF0324 membrane protein DVU_0543 (369 aa).

The next 9 helical transmembrane spans lie at 13-31 (IVPG…RTYV), 46-65 (WLVQ…TGMF), 110-132 (GGVA…MWLG), 142-164 (TATM…APGV), 171-193 (LALS…PFIG), 240-262 (WNVV…YWKG), 269-291 (TSLG…GMTA), 306-328 (LHLM…GAYI), and 341-363 (LRIG…LAFI).

Belongs to the UPF0324 family.

It localises to the cell membrane. This chain is UPF0324 membrane protein DVU_0543, found in Nitratidesulfovibrio vulgaris (strain ATCC 29579 / DSM 644 / CCUG 34227 / NCIMB 8303 / VKM B-1760 / Hildenborough) (Desulfovibrio vulgaris).